Consider the following 351-residue polypeptide: Phenylalanine--tRNA ligase alpha subunit (351 aa).

E276 lines the Mg(2+) pocket.

The protein belongs to the class-II aminoacyl-tRNA synthetase family. Phe-tRNA synthetase alpha subunit type 1 subfamily. In terms of assembly, tetramer of two alpha and two beta subunits. Requires Mg(2+) as cofactor.

Its subcellular location is the cytoplasm. It carries out the reaction tRNA(Phe) + L-phenylalanine + ATP = L-phenylalanyl-tRNA(Phe) + AMP + diphosphate + H(+). This is Phenylalanine--tRNA ligase alpha subunit from Psychrobacter arcticus (strain DSM 17307 / VKM B-2377 / 273-4).